The following is a 98-amino-acid chain: uncharacterized protein (98 aa).

The protein belongs to the Rv1128c/1148c/1588c/1702c/1945/3466 family.

This is an uncharacterized protein from Mycobacterium tuberculosis (strain ATCC 25618 / H37Rv).